Consider the following 100-residue polypeptide: Urease subunit gamma (100 aa).

The protein belongs to the urease gamma subunit family. Heterotrimer of UreA (gamma), UreB (beta) and UreC (alpha) subunits. Three heterotrimers associate to form the active enzyme.

It localises to the cytoplasm. It carries out the reaction urea + 2 H2O + H(+) = hydrogencarbonate + 2 NH4(+). Its pathway is nitrogen metabolism; urea degradation; CO(2) and NH(3) from urea (urease route): step 1/1. This chain is Urease subunit gamma, found in Corynebacterium efficiens (strain DSM 44549 / YS-314 / AJ 12310 / JCM 11189 / NBRC 100395).